Reading from the N-terminus, the 565-residue chain is Adenine deaminase (565 aa).

Belongs to the metallo-dependent hydrolases superfamily. Adenine deaminase family. Requires Mn(2+) as cofactor.

The catalysed reaction is adenine + H2O + H(+) = hypoxanthine + NH4(+). The polypeptide is Adenine deaminase (Methylobacterium nodulans (strain LMG 21967 / CNCM I-2342 / ORS 2060)).